The sequence spans 329 residues: Vitamin B12 import system permease protein BtuC (329 aa).

The next 9 membrane-spanning stretches (helical) occupy residues 22 to 42 (LSVL…QWIA), 64 to 84 (LAVL…QALF), 91 to 111 (PGLL…VLLG), 115 to 135 (LPGW…TLIL), 149 to 169 (LLAG…AIYF), 187 to 207 (GGVD…SLWI), 243 to 263 (GWMV…GLVI), 277 to 297 (ALLP…DVIA), and 305 to 325 (ELPI…WLLL).

The protein belongs to the binding-protein-dependent transport system permease family. FecCD subfamily. As to quaternary structure, the complex is composed of two ATP-binding proteins (BtuD), two transmembrane proteins (BtuC) and a solute-binding protein (BtuF).

The protein localises to the cell inner membrane. Functionally, part of the ABC transporter complex BtuCDF involved in vitamin B12 import. Involved in the translocation of the substrate across the membrane. In Citrobacter koseri (strain ATCC BAA-895 / CDC 4225-83 / SGSC4696), this protein is Vitamin B12 import system permease protein BtuC.